Reading from the N-terminus, the 290-residue chain is Ribosomal RNA small subunit methyltransferase A (290 aa).

6 residues coordinate S-adenosyl-L-methionine: Asn27, Leu29, Gly54, Glu75, Asp100, and Asn125.

Belongs to the class I-like SAM-binding methyltransferase superfamily. rRNA adenine N(6)-methyltransferase family. RsmA subfamily.

Its subcellular location is the cytoplasm. The catalysed reaction is adenosine(1518)/adenosine(1519) in 16S rRNA + 4 S-adenosyl-L-methionine = N(6)-dimethyladenosine(1518)/N(6)-dimethyladenosine(1519) in 16S rRNA + 4 S-adenosyl-L-homocysteine + 4 H(+). Its function is as follows. Specifically dimethylates two adjacent adenosines (A1518 and A1519) in the loop of a conserved hairpin near the 3'-end of 16S rRNA in the 30S particle. May play a critical role in biogenesis of 30S subunits. This Streptococcus pneumoniae (strain ATCC 700669 / Spain 23F-1) protein is Ribosomal RNA small subunit methyltransferase A.